The following is a 219-amino-acid chain: Small ribosomal subunit protein uS3 (219 aa).

One can recognise a KH type-2 domain in the interval 38–106 (IRKFIEKRLV…RVHINIVEIK (69 aa)).

Belongs to the universal ribosomal protein uS3 family. As to quaternary structure, part of the 30S ribosomal subunit. Forms a tight complex with proteins S10 and S14.

Its function is as follows. Binds the lower part of the 30S subunit head. Binds mRNA in the 70S ribosome, positioning it for translation. The sequence is that of Small ribosomal subunit protein uS3 from Levilactobacillus brevis (strain ATCC 367 / BCRC 12310 / CIP 105137 / JCM 1170 / LMG 11437 / NCIMB 947 / NCTC 947) (Lactobacillus brevis).